The following is a 534-amino-acid chain: MTGAEEWKLSMGLEDTVPARLHEHGEASWTAERSHVCSIRQANDSAGALPVAGKPEPMARSLASAPVSPWHHMDRGSTTPAKARSHSASYHCPSSSQICVPGVGSPSAGYGDVPGASGHRPNLLSWPPALSRKESFLILTAHNRLRSRVHPPAANMQRMDWSESLAQLAEARAALCVTSVTPNLASTPGHNSHVGWNVQLMPMGSASFVEVVNLWFAEGLQYRHGDAECAHNATCAHYTQLVWATSSQLGCGRQPCFVDQEAMEAFVCAYSPGGNWDINGKTVAPYKKGTWCSLCTARVSGCFKAWDHAGGLCEVPRNPCRMSCRNLGHLNISTCRCHCQPGYTGRYCQVRCSVQCVHGQFRKEECSCICDVGYGGAQCATKVGFPFHTCDLRIDGDCFMVSPEADTYYGAKMKCQGKGGVLAQIESQKVQDILAFYLGRLETTNEVTDSDFETKNFWIGLTYKAAKDSFRWTTGEHQSFTSFAFGQPDNQGFGNCVEMQASAAFNWNDQRCKTRNRYICQFAQKHYSRWEPGP.

A disordered region spans residues 47–88; sequence GALPVAGKPEPMARSLASAPVSPWHHMDRGSTTPAKARSHSA. Residues 139-270 enclose the SCP domain; the sequence is LTAHNRLRSR…EAMEAFVCAY (132 aa). The EGF-like domain occupies 316 to 349; it reads PRNPCRMSCRNLGHLNISTCRCHCQPGYTGRYCQ. Cystine bridges form between C324-C337, C339-C348, C415-C520, and C496-C512. The 128-residue stretch at 394-521 folds into the C-type lectin domain; the sequence is IDGDCFMVSP…CKTRNRYICQ (128 aa).

It localises to the secreted. This is C-type lectin domain family 18 member A (Clec18a) from Mus musculus (Mouse).